The following is a 406-amino-acid chain: Tyrosine--tRNA ligase (406 aa).

Tyr-35 lines the L-tyrosine pocket. The short motif at 40-49 (PTADSLHVGH) is the 'HIGH' region element. 2 residues coordinate L-tyrosine: Tyr-168 and Gln-172. The 'KMSKS' region signature appears at 228–232 (KMGKT). ATP is bound at residue Lys-231. Residues 340–404 (SELLDILVEA…RGKKNYNKIV (65 aa)) enclose the S4 RNA-binding domain.

It belongs to the class-I aminoacyl-tRNA synthetase family. TyrS type 1 subfamily. In terms of assembly, homodimer.

The protein resides in the cytoplasm. It catalyses the reaction tRNA(Tyr) + L-tyrosine + ATP = L-tyrosyl-tRNA(Tyr) + AMP + diphosphate + H(+). Functionally, catalyzes the attachment of tyrosine to tRNA(Tyr) in a two-step reaction: tyrosine is first activated by ATP to form Tyr-AMP and then transferred to the acceptor end of tRNA(Tyr). In Clostridium perfringens (strain ATCC 13124 / DSM 756 / JCM 1290 / NCIMB 6125 / NCTC 8237 / Type A), this protein is Tyrosine--tRNA ligase.